The primary structure comprises 379 residues: Glucose-1-phosphate adenylyltransferase (379 aa).

Alpha-D-glucose 1-phosphate is bound by residues Tyr-99, Gly-164, 179–180, and Ser-190; that span reads EK.

Belongs to the bacterial/plant glucose-1-phosphate adenylyltransferase family. In terms of assembly, homotetramer.

It catalyses the reaction alpha-D-glucose 1-phosphate + ATP + H(+) = ADP-alpha-D-glucose + diphosphate. It functions in the pathway glycan biosynthesis; glycogen biosynthesis. Functionally, involved in the biosynthesis of ADP-glucose, a building block required for the elongation reactions to produce glycogen. Catalyzes the reaction between ATP and alpha-D-glucose 1-phosphate (G1P) to produce pyrophosphate and ADP-Glc. The chain is Glucose-1-phosphate adenylyltransferase from Bacillus licheniformis (strain ATCC 14580 / DSM 13 / JCM 2505 / CCUG 7422 / NBRC 12200 / NCIMB 9375 / NCTC 10341 / NRRL NRS-1264 / Gibson 46).